Consider the following 195-residue polypeptide: Obelin (195 aa).

Residues 1-6 constitute a propeptide that is removed on maturation; it reads MASKYA. 4 consecutive EF-hand domains span residues 17 to 52, 53 to 88, 110 to 145, and 146 to 181; these read KWIK…DICK, NLGA…FPEF, LIRE…SGIS, and PSEE…FWYT. Positions 30, 32, 34, 36, and 41 each coordinate Ca(2+). Aspartate 123, aspartate 125, serine 127, threonine 129, glutamate 134, aspartate 159, aspartate 161, serine 163, glutamate 165, and glutamate 170 together coordinate Ca(2+).

Belongs to the aequorin family.

In terms of biological role, ca(2+)-dependent bioluminescence photoprotein. Displays an emission peak at 495 nm (blue light). Trace amounts of calcium ion trigger the intramolecular oxidation of the chromophore, coelenterazine into coelenteramide and CO(2) with the concomitant emission of light. The protein is Obelin of Obelia geniculata (Knotted thread hydroid).